The following is a 492-amino-acid chain: Ribulose bisphosphate carboxylase large chain (492 aa).

Substrate is bound by residues Asn131 and Thr181. Catalysis depends on Lys183, which acts as the Proton acceptor. Lys185 lines the substrate pocket. Residues Lys209, Asp211, and Glu212 each coordinate Mg(2+). Lys209 bears the N6-carboxylysine mark. The active-site Proton acceptor is the His301. Arg302, His334, and Ser386 together coordinate substrate.

The protein belongs to the RuBisCO large chain family. Type I subfamily. As to quaternary structure, heterohexadecamer of 8 large chains and 8 small chains. Mg(2+) serves as cofactor.

It carries out the reaction 2 (2R)-3-phosphoglycerate + 2 H(+) = D-ribulose 1,5-bisphosphate + CO2 + H2O. It catalyses the reaction D-ribulose 1,5-bisphosphate + O2 = 2-phosphoglycolate + (2R)-3-phosphoglycerate + 2 H(+). Functionally, ruBisCO catalyzes two reactions: the carboxylation of D-ribulose 1,5-bisphosphate, the primary event in carbon dioxide fixation, as well as the oxidative fragmentation of the pentose substrate. Both reactions occur simultaneously and in competition at the same active site. This is Ribulose bisphosphate carboxylase large chain from Nitrosococcus oceani (strain ATCC 19707 / BCRC 17464 / JCM 30415 / NCIMB 11848 / C-107).